A 418-amino-acid chain; its full sequence is Glutamyl-tRNA reductase (418 aa).

Substrate-binding positions include 49–52, serine 109, 114–116, and glutamine 120; these read TCNR and EPQ. Cysteine 50 serves as the catalytic Nucleophile. 189–194 is an NADP(+) binding site; the sequence is GAGETI.

Belongs to the glutamyl-tRNA reductase family. In terms of assembly, homodimer.

The enzyme catalyses (S)-4-amino-5-oxopentanoate + tRNA(Glu) + NADP(+) = L-glutamyl-tRNA(Glu) + NADPH + H(+). It functions in the pathway porphyrin-containing compound metabolism; protoporphyrin-IX biosynthesis; 5-aminolevulinate from L-glutamyl-tRNA(Glu): step 1/2. Its function is as follows. Catalyzes the NADPH-dependent reduction of glutamyl-tRNA(Glu) to glutamate 1-semialdehyde (GSA). This chain is Glutamyl-tRNA reductase, found in Escherichia coli O45:K1 (strain S88 / ExPEC).